The chain runs to 246 residues: tRNA (guanine-N(1)-)-methyltransferase (246 aa).

Residues glycine 114 and 134 to 139 (IGDYIL) each bind S-adenosyl-L-methionine.

This sequence belongs to the RNA methyltransferase TrmD family. Homodimer.

It is found in the cytoplasm. The catalysed reaction is guanosine(37) in tRNA + S-adenosyl-L-methionine = N(1)-methylguanosine(37) in tRNA + S-adenosyl-L-homocysteine + H(+). Functionally, specifically methylates guanosine-37 in various tRNAs. The sequence is that of tRNA (guanine-N(1)-)-methyltransferase from Coxiella burnetii (strain CbuK_Q154) (Coxiella burnetii (strain Q154)).